We begin with the raw amino-acid sequence, 263 residues long: Probable ribosomal RNA small subunit methyltransferase A (263 aa).

Residues Leu-12, Gly-37, Glu-58, Asp-83, and Asn-100 each contribute to the S-adenosyl-L-methionine site.

Belongs to the class I-like SAM-binding methyltransferase superfamily. rRNA adenine N(6)-methyltransferase family. RsmA subfamily.

It is found in the cytoplasm. Its function is as follows. Specifically dimethylates two adjacent adenosines in the loop of a conserved hairpin near the 3'-end of 16S rRNA in the 30S particle. May play a critical role in biogenesis of 30S subunits. This chain is Probable ribosomal RNA small subunit methyltransferase A, found in Methanococcus maripaludis (strain C6 / ATCC BAA-1332).